The following is a 340-amino-acid chain: RNA 3'-terminal phosphate cyclase (340 aa).

ATP-binding positions include glutamine 102 and 284 to 288; that span reads FLGDQ. Histidine 308 acts as the Tele-AMP-histidine intermediate in catalysis.

Belongs to the RNA 3'-terminal cyclase family. Type 1 subfamily.

Its subcellular location is the cytoplasm. The enzyme catalyses a 3'-end 3'-phospho-ribonucleotide-RNA + ATP = a 3'-end 2',3'-cyclophospho-ribonucleotide-RNA + AMP + diphosphate. Catalyzes the conversion of 3'-phosphate to a 2',3'-cyclic phosphodiester at the end of RNA. The mechanism of action of the enzyme occurs in 3 steps: (A) adenylation of the enzyme by ATP; (B) transfer of adenylate to an RNA-N3'P to produce RNA-N3'PP5'A; (C) and attack of the adjacent 2'-hydroxyl on the 3'-phosphorus in the diester linkage to produce the cyclic end product. The biological role of this enzyme is unknown but it is likely to function in some aspects of cellular RNA processing. This Thermococcus onnurineus (strain NA1) protein is RNA 3'-terminal phosphate cyclase.